Reading from the N-terminus, the 346-residue chain is MGENLPLLLSAALGKKVNRPPVWMMRQAGRYMKIYRDLRERYPSFRERSENPELSYEISMQPFLAFKPDGVILFSDILTPLPGMGINFEIIESKGPIIEDPIRNIRQVEKLKELIPNESLSFVGEVLSSLKKDVKNEATVLGFVGAPWTLAAYVVEGKSSKNYSLIKSMAFKEPDLLHKLLDHFAKSIGEYLKYQIKSGAQVVQIFDSWAGQLSPQDYDIFAGPYQKKVVDIVKEEFPDTPIILYISGSAGVLERMAKTGVDIISLDWTVDIEEACKRIPTGIGIQGNVDPGILFGNKDSIKERIDNTFNKVKERKYILNLGHGILPGTPEENAKTFFEHGKKLTY.

Substrate-binding positions include 26 to 30, Phe45, Asp76, Tyr153, Ser208, and His323; that span reads RQAGR.

It belongs to the uroporphyrinogen decarboxylase family. In terms of assembly, homodimer.

It localises to the cytoplasm. The enzyme catalyses uroporphyrinogen III + 4 H(+) = coproporphyrinogen III + 4 CO2. It participates in porphyrin-containing compound metabolism; protoporphyrin-IX biosynthesis; coproporphyrinogen-III from 5-aminolevulinate: step 4/4. Its function is as follows. Catalyzes the decarboxylation of four acetate groups of uroporphyrinogen-III to yield coproporphyrinogen-III. The protein is Uroporphyrinogen decarboxylase of Prochlorococcus marinus subsp. pastoris (strain CCMP1986 / NIES-2087 / MED4).